The chain runs to 378 residues: Acetylornithine deacetylase (378 aa).

His-76 lines the Zn(2+) pocket. The active site involves Asp-78. Asp-108 lines the Zn(2+) pocket. Glu-140 is a catalytic residue. Glu-141, Glu-165, and His-351 together coordinate Zn(2+).

The protein belongs to the peptidase M20A family. ArgE subfamily. As to quaternary structure, homodimer. It depends on Zn(2+) as a cofactor. Requires Co(2+) as cofactor. Glutathione serves as cofactor.

It is found in the cytoplasm. The enzyme catalyses N(2)-acetyl-L-ornithine + H2O = L-ornithine + acetate. Its pathway is amino-acid biosynthesis; L-arginine biosynthesis; L-ornithine from N(2)-acetyl-L-ornithine (linear): step 1/1. Functionally, catalyzes the hydrolysis of the amide bond of N(2)-acetylated L-amino acids. Cleaves the acetyl group from N-acetyl-L-ornithine to form L-ornithine, an intermediate in L-arginine biosynthesis pathway, and a branchpoint in the synthesis of polyamines. This Vibrio atlanticus (strain LGP32) (Vibrio splendidus (strain Mel32)) protein is Acetylornithine deacetylase.